The following is a 370-amino-acid chain: 3-dehydroquinate synthase (370 aa).

NAD(+) is bound by residues Gly-112–Asp-116, Thr-136–Thr-137, Lys-149, Lys-158, and Thr-176–Thr-179. Zn(2+) is bound by residues Glu-191, His-256, and His-273.

The protein belongs to the sugar phosphate cyclases superfamily. Dehydroquinate synthase family. Requires Co(2+) as cofactor. It depends on Zn(2+) as a cofactor. NAD(+) serves as cofactor.

The protein localises to the cytoplasm. It carries out the reaction 7-phospho-2-dehydro-3-deoxy-D-arabino-heptonate = 3-dehydroquinate + phosphate. It functions in the pathway metabolic intermediate biosynthesis; chorismate biosynthesis; chorismate from D-erythrose 4-phosphate and phosphoenolpyruvate: step 2/7. Its function is as follows. Catalyzes the conversion of 3-deoxy-D-arabino-heptulosonate 7-phosphate (DAHP) to dehydroquinate (DHQ). The polypeptide is 3-dehydroquinate synthase (Prochlorococcus marinus (strain MIT 9211)).